The chain runs to 137 residues: Nucleoside diphosphate kinase (137 aa).

Residues lysine 10, phenylalanine 59, arginine 87, threonine 93, arginine 104, and asparagine 114 each contribute to the ATP site. Histidine 117 acts as the Pros-phosphohistidine intermediate in catalysis.

The protein belongs to the NDK family. As to quaternary structure, homotetramer. Requires Mg(2+) as cofactor.

It localises to the cytoplasm. The catalysed reaction is a 2'-deoxyribonucleoside 5'-diphosphate + ATP = a 2'-deoxyribonucleoside 5'-triphosphate + ADP. It carries out the reaction a ribonucleoside 5'-diphosphate + ATP = a ribonucleoside 5'-triphosphate + ADP. Its function is as follows. Major role in the synthesis of nucleoside triphosphates other than ATP. The ATP gamma phosphate is transferred to the NDP beta phosphate via a ping-pong mechanism, using a phosphorylated active-site intermediate. The polypeptide is Nucleoside diphosphate kinase (Streptomyces avermitilis (strain ATCC 31267 / DSM 46492 / JCM 5070 / NBRC 14893 / NCIMB 12804 / NRRL 8165 / MA-4680)).